Reading from the N-terminus, the 500-residue chain is Toluene-4-monooxygenase system, hydroxylase component subunit alpha (500 aa).

E104, E134, H137, E197, E231, and H234 together coordinate Fe cation.

The protein belongs to the TmoA/XamoA family. The alkene monooxygenase multicomponent enzyme system is composed of an electron transfer component and a monooxygenase component interacting with the effector protein TmoD. The electron transfer component is composed of a ferredoxin reductase (TmoF) and a ferredoxin (TmoC), and the monooxygenase component is formed by a heterohexamer (dimer of heterotrimers) of two alpha subunits (TmoA), two beta subunits (TmoE) and two gamma subunits (TmoB). The cofactor is Fe(2+).

It carries out the reaction toluene + NADH + O2 + H(+) = 4-methylphenol + NAD(+) + H2O. The protein operates within xenobiotic degradation; toluene degradation. Inhibited by Zn(2+) and Cu(2+). Functionally, component of the toluene-4-monooxygenase multicomponent enzyme system which catalyzes the O2- and NADH-dependent hydroxylation of toluene to form p-cresol. Also able to convert benzene to phenol, catechol, and 1,2,3-trihydroxybenzene by successive hydroxylations. This chain is Toluene-4-monooxygenase system, hydroxylase component subunit alpha, found in Ectopseudomonas mendocina (Pseudomonas mendocina).